Here is a 176-residue protein sequence, read N- to C-terminus: Outer membrane protein assembly factor BamE (176 aa).

An N-terminal signal peptide occupies residues 1–21; it reads MQNAKLMLTCLAFAGLAALAG. Cys-22 is lipidated: N-palmitoyl cysteine. Cys-22 carries the S-diacylglycerol cysteine lipid modification. The interval 121–176 is disordered; sequence KEGSTTVTQPADQQKPEAQKEEPPKPGSTLEQLQREVDEAQPVPVPTPEPLDPSPQ. The segment covering 123 to 132 has biased composition (polar residues); that stretch reads GSTTVTQPAD. The span at 134–144 shows a compositional bias: basic and acidic residues; it reads QKPEAQKEEPP. Residues 163–176 show a composition bias toward pro residues; it reads VPVPTPEPLDPSPQ.

It belongs to the BamE family. As to quaternary structure, part of the Bam complex.

It is found in the cell outer membrane. Functionally, part of the outer membrane protein assembly complex, which is involved in assembly and insertion of beta-barrel proteins into the outer membrane. May have a structural role in maintaining the cell envelope integrity. This is Outer membrane protein assembly factor BamE from Pseudomonas aeruginosa (strain ATCC 15692 / DSM 22644 / CIP 104116 / JCM 14847 / LMG 12228 / 1C / PRS 101 / PAO1).